The sequence spans 386 residues: Pepsin A (386 aa).

The first 15 residues, 1-15 (MKWLLLLSLVALSEC), serve as a signal peptide directing secretion. Positions 16-60 (YIYKVPLVKKKSLRKNLMEQGLLQDYLKTHSINPASKYLKEAASM) are cleaved as a propeptide — activation peptide. One can recognise a Peptidase A1 domain in the interval 74 to 383 (YFGTIGIGTP…DRGNNQVGLA (310 aa)). Aspartate 92 is an active-site residue. Disulfide bonds link cysteine 105–cysteine 110 and cysteine 266–cysteine 270. The active site involves aspartate 275. Cysteine 309 and cysteine 342 are oxidised to a cystine.

Belongs to the peptidase A1 family.

Its subcellular location is the secreted. The enzyme catalyses Preferential cleavage: hydrophobic, preferably aromatic, residues in P1 and P1' positions. Cleaves 1-Phe-|-Val-2, 4-Gln-|-His-5, 13-Glu-|-Ala-14, 14-Ala-|-Leu-15, 15-Leu-|-Tyr-16, 16-Tyr-|-Leu-17, 23-Gly-|-Phe-24, 24-Phe-|-Phe-25 and 25-Phe-|-Tyr-26 bonds in the B chain of insulin.. Its function is as follows. Shows particularly broad specificity; although bonds involving phenylalanine and leucine are preferred, many others are also cleaved to some extent. This chain is Pepsin A (PGA), found in Rhinolophus ferrumequinum (Greater horseshoe bat).